Consider the following 575-residue polypeptide: Reverse gyrse subunit B (575 aa).

The RG N-terminal-type; degenerate zinc-finger motif lies at 1-39 (MKIYYNNVCPNCSGRISNERLIKGLPCENDYPYEEGTIE). Residues Gln-83 and 100–107 (APTGMGKT) each bind ATP. Residues 87–247 (FIRAYKGYSF…KLKISGKDLE (161 aa)) enclose the Helicase ATP-binding domain. The DEAD box motif lies at 204–207 (DDVD). The 150-residue stretch at 316-465 (QTLELIKKLG…ALKMVEEAIE (150 aa)) folds into the Helicase C-terminal domain.

Belongs to the DEAD box helicase family. DDVD subfamily. As to quaternary structure, heterodimer of an RgyA and RgyB subunit.

The protein localises to the cytoplasm. The enzyme catalyses ATP + H2O = ADP + phosphate + H(+). In terms of biological role, modifies the topological state of DNA by introducing positive supercoils in an ATP-dependent process. Binds to single-stranded DNA, transiently cleaves and then rejoins the end, introducing a positive supercoil in the process. The scissile phosphodiester is attacked by the catalytic tyrosine of the enzyme, resulting in the formation of a DNA-(5'-phosphotyrosyl)-enzyme intermediate. Probably involved in rewinding DNA strands in regions of the chromosome that have opened up to allow replication, transcription, DNA repair or for DNA protection. Reconstituted holoenzyme binds dsDNA a bit better than ssDNA, this subunit preferentially binds dsDNA. In isolation this subunit has DNA-stimulated ATPase activity that is stimulated by topoisomerase-domain containing RgyA. This subunit inhibits the relaxation activity of the topoisomerase subunit while promoting positive supercoiling. The chain is Reverse gyrse subunit B from Nanoarchaeum equitans (strain Kin4-M).